A 154-amino-acid polypeptide reads, in one-letter code: Prefoldin subunit 5 (154 aa).

Ala-2 is subject to N-acetylalanine. An N6-acetyllysine modification is found at Lys-42. Ser-56 carries the phosphoserine modification.

It belongs to the prefoldin subunit alpha family. In terms of assembly, heterohexamer of two PFD-alpha type and four PFD-beta type subunits.

It localises to the nucleus. Functionally, binds specifically to cytosolic chaperonin (c-CPN) and transfers target proteins to it. Binds to nascent polypeptide chain and promotes folding in an environment in which there are many competing pathways for nonnative proteins. Represses the transcriptional activity of MYC. This is Prefoldin subunit 5 (PFDN5) from Pongo abelii (Sumatran orangutan).